The primary structure comprises 217 residues: Protein TNT (217 aa).

Positions 1–217 are disordered; the sequence is MSLVPGQHCS…HSTKQTGGKE (217 aa). Polar residues-rich tracts occupy residues 20–36 and 45–61; these read SPIT…TEFS and TSPQ…SQGP. Composition is skewed to low complexity over residues 91–104 and 128–139; these read EPSL…LQSP and QSSESHVSSVQH. Polar residues-rich tracts occupy residues 177–191 and 207–217; these read RLNT…SQLG and AHSTKQTGGKE.

As to expression, preferentially expressed in teratocarcinoma rather than in normal testis.

The chain is Protein TNT (C16orf82) from Homo sapiens (Human).